The following is a 417-amino-acid chain: Serine--tRNA ligase (417 aa).

226–228 contacts L-serine; that stretch reads TSE. ATP-binding positions include 257 to 259 and V273; that span reads RRE. E280 serves as a coordination point for L-serine. 344-347 contacts ATP; it reads EVTS. T379 serves as a coordination point for L-serine.

Belongs to the class-II aminoacyl-tRNA synthetase family. Type-1 seryl-tRNA synthetase subfamily. Homodimer. The tRNA molecule binds across the dimer.

It is found in the cytoplasm. The catalysed reaction is tRNA(Ser) + L-serine + ATP = L-seryl-tRNA(Ser) + AMP + diphosphate + H(+). It carries out the reaction tRNA(Sec) + L-serine + ATP = L-seryl-tRNA(Sec) + AMP + diphosphate + H(+). Its pathway is aminoacyl-tRNA biosynthesis; selenocysteinyl-tRNA(Sec) biosynthesis; L-seryl-tRNA(Sec) from L-serine and tRNA(Sec): step 1/1. Its function is as follows. Catalyzes the attachment of serine to tRNA(Ser). Is also able to aminoacylate tRNA(Sec) with serine, to form the misacylated tRNA L-seryl-tRNA(Sec), which will be further converted into selenocysteinyl-tRNA(Sec). The sequence is that of Serine--tRNA ligase from Tropheryma whipplei (strain Twist) (Whipple's bacillus).